The primary structure comprises 137 residues: Large ribosomal subunit protein uL16 (137 aa).

The protein belongs to the universal ribosomal protein uL16 family. Part of the 50S ribosomal subunit.

Binds 23S rRNA and is also seen to make contacts with the A and possibly P site tRNAs. The chain is Large ribosomal subunit protein uL16 from Rhodopseudomonas palustris (strain BisA53).